The primary structure comprises 228 residues: R-spondin-4 (228 aa).

The N-terminal stretch at 1-19 is a signal peptide; the sequence is MRAPLCLLLLLAHAVDMLA. N-linked (GlcNAc...) asparagine glycosylation is present at Asn-34. Intrachain disulfides connect Cys-35/Cys-41, Cys-38/Cys-47, Cys-50/Cys-69, Cys-73/Cys-88, Cys-91/Cys-98, Cys-95/Cys-104, Cys-107/Cys-118, Cys-122/Cys-135, Cys-139/Cys-181, Cys-150/Cys-157, and Cys-190/Cys-196. The stretch at 85 to 128 is one FU repeat; it reads ANRCKKCGATCESCFSQDFCIRCKRRFHLYKGKCLPSCPPGTLT. The 60-residue stretch at 138-197 folds into the TSP type-1 domain; it reads ECEPSPWGSWSPCIHNGKTCGSGWGLETRVREAGPAKQEETASCRVLSESRKCPIKRLCP. Residues 193-228 are disordered; that stretch reads KRLCPGERNPRQKNRKDRRQRKDRKLERRPHQRGSQ. A compositionally biased stretch (basic residues) spans 203–228; the sequence is RQKNRKDRRQRKDRKLERRPHQRGSQ.

Belongs to the R-spondin family. Binds heparin. Interacts with LGR4, LGR5 and LGR6.

It localises to the secreted. Its function is as follows. Activator of the canonical Wnt signaling pathway by acting as a ligand for LGR4-6 receptors. Upon binding to LGR4-6 (LGR4, LGR5 or LGR6), LGR4-6 associate with phosphorylated LRP6 and frizzled receptors that are activated by extracellular Wnt receptors, triggering the canonical Wnt signaling pathway to increase expression of target genes. Also regulates the canonical Wnt/beta-catenin-dependent pathway and non-canonical Wnt signaling by acting as an inhibitor of ZNRF3, an important regulator of the Wnt signaling pathway. This Mus musculus (Mouse) protein is R-spondin-4 (Rspo4).